The following is a 474-amino-acid chain: tRNA-2-methylthio-N(6)-dimethylallyladenosine synthase (474 aa).

The region spanning 3-120 (QKLHIKTWGC…LPEMINQIRA (118 aa)) is the MTTase N-terminal domain. Residues C12, C49, C83, C157, C161, and C164 each contribute to the [4Fe-4S] cluster site. One can recognise a Radical SAM core domain in the interval 143–375 (KAEGPTAFVS…QQRINNQAAQ (233 aa)). Residues 378–441 (RAMLGTEQRV…TNSLRGDVVR (64 aa)) form the TRAM domain.

Belongs to the methylthiotransferase family. MiaB subfamily. As to quaternary structure, monomer. It depends on [4Fe-4S] cluster as a cofactor.

It is found in the cytoplasm. It carries out the reaction N(6)-dimethylallyladenosine(37) in tRNA + (sulfur carrier)-SH + AH2 + 2 S-adenosyl-L-methionine = 2-methylsulfanyl-N(6)-dimethylallyladenosine(37) in tRNA + (sulfur carrier)-H + 5'-deoxyadenosine + L-methionine + A + S-adenosyl-L-homocysteine + 2 H(+). Its function is as follows. Catalyzes the methylthiolation of N6-(dimethylallyl)adenosine (i(6)A), leading to the formation of 2-methylthio-N6-(dimethylallyl)adenosine (ms(2)i(6)A) at position 37 in tRNAs that read codons beginning with uridine. In Mannheimia succiniciproducens (strain KCTC 0769BP / MBEL55E), this protein is tRNA-2-methylthio-N(6)-dimethylallyladenosine synthase.